The primary structure comprises 429 residues: MNFSESERLQQLSNEYILGGVNSPSRSYKAVGGGAPVVMKEGHGAYLYDVDGNKFIDYLQAYGPIIAGHAHPHITKAIQEQAAKGVLFGTPTELEIEFSKKLRDAIPSLEKIRFVNSGTEAVMTTIRVARAYTKRNKIIKFAGSYHGHSDLVLVAAGSGPSQLGSPDSAGVPESVAREVITVPFNDINAYKEAIEFWGDEIAAVLVEPIVGNFGMVMPQPGFLEEVNEISHNNGTLVIYDEVITAFRFHYGAAQDLLGVIPDLTAFGKIVGGGLPIGGYGGRQDIMEQVAPLGPAYQAGTMAGNPLSMKAGIALLEVLEQDGVYEKLDSLGQQLEEGLLKLIEKHNITATINRIYGSLTLYFTDEKVTHYDQVEHSDGEAFGKFFKLMLNQGINLAPSKFEAWFLTTEHTEEDIQQTLKAADYAFSQMK.

Position 268 is an N6-(pyridoxal phosphate)lysine (lysine 268).

Belongs to the class-III pyridoxal-phosphate-dependent aminotransferase family. HemL subfamily. As to quaternary structure, homodimer. It depends on pyridoxal 5'-phosphate as a cofactor.

The protein resides in the cytoplasm. It catalyses the reaction (S)-4-amino-5-oxopentanoate = 5-aminolevulinate. Its pathway is porphyrin-containing compound metabolism; protoporphyrin-IX biosynthesis; 5-aminolevulinate from L-glutamyl-tRNA(Glu): step 2/2. This chain is Glutamate-1-semialdehyde 2,1-aminomutase 2, found in Staphylococcus aureus (strain Mu50 / ATCC 700699).